A 419-amino-acid chain; its full sequence is UDP-N-acetylglucosamine 1-carboxyvinyltransferase (419 aa).

A phosphoenolpyruvate-binding site is contributed by 22-23; it reads KN. Arg91 contributes to the UDP-N-acetyl-alpha-D-glucosamine binding site. Cys115 functions as the Proton donor in the catalytic mechanism. Cys115 carries the 2-(S-cysteinyl)pyruvic acid O-phosphothioketal modification. UDP-N-acetyl-alpha-D-glucosamine contacts are provided by residues 120–124, 160–163, Asp305, and Ile327; these read RPVDL and KVSV.

It belongs to the EPSP synthase family. MurA subfamily.

The protein localises to the cytoplasm. The catalysed reaction is phosphoenolpyruvate + UDP-N-acetyl-alpha-D-glucosamine = UDP-N-acetyl-3-O-(1-carboxyvinyl)-alpha-D-glucosamine + phosphate. It functions in the pathway cell wall biogenesis; peptidoglycan biosynthesis. Cell wall formation. Adds enolpyruvyl to UDP-N-acetylglucosamine. This is UDP-N-acetylglucosamine 1-carboxyvinyltransferase from Cronobacter sakazakii (strain ATCC BAA-894) (Enterobacter sakazakii).